Reading from the N-terminus, the 563-residue chain is Arginine--tRNA ligase (563 aa).

Residues 121–131 (PNIAKPFSIGH) carry the 'HIGH' region motif.

The protein belongs to the class-I aminoacyl-tRNA synthetase family. In terms of assembly, monomer.

It localises to the cytoplasm. The enzyme catalyses tRNA(Arg) + L-arginine + ATP = L-arginyl-tRNA(Arg) + AMP + diphosphate. In Streptococcus pneumoniae serotype 4 (strain ATCC BAA-334 / TIGR4), this protein is Arginine--tRNA ligase (argS).